A 409-amino-acid polypeptide reads, in one-letter code: Isovaleryl-CoA dehydrogenase, mitochondrial (409 aa).

The transit peptide at 1 to 22 (MAAAQRWLPGILRRGDGLARRL) directs the protein to the mitochondrion. FAD is bound by residues 151 to 160 (LAMSEPNSGS) and 184 to 186 (WCT). Ser160 provides a ligand contact to substrate. Substrate-binding positions include 206 to 207 (SK), Tyr261, and 268 to 271 (DLER). Residue Glu270 is the Proton acceptor of the active site. Residues Arg296, Gln307, and 364-368 (QCLGG) contribute to the FAD site. Position 391–392 (391–392 (AG)) interacts with substrate. 393–395 (TSE) contributes to the FAD binding site.

Belongs to the acyl-CoA dehydrogenase family. Homodimer. Requires FAD as cofactor.

It localises to the mitochondrion. It catalyses the reaction 3-methylbutanoyl-CoA + oxidized [electron-transfer flavoprotein] + H(+) = 3-methylbut-2-enoyl-CoA + reduced [electron-transfer flavoprotein]. The protein operates within amino-acid degradation; L-leucine degradation; (S)-3-hydroxy-3-methylglutaryl-CoA from 3-isovaleryl-CoA: step 1/3. The polypeptide is Isovaleryl-CoA dehydrogenase, mitochondrial (Oryza sativa subsp. japonica (Rice)).